Reading from the N-terminus, the 344-residue chain is METAKPIAPQKDSKANGVDATDPVVKVASPQDPAGDAKVEDATAPVAEVEPRTPRNRRLPTPENVRHAFESGKYPYSRKMSRRPYEAEKAMLQAELLKVQLWAQETGERFVLLFEGRDAAGKGGTIKRFMEHLNPRQARVVALNKPTWEEKGQWYYQRYVQELPTVGEMVFYDRSWYNRAGVERVMGFCTPNEYLEFMRQTPDLERMLVRSGIRLYKYWFSVTQEEQQRRFKSRETDPLKQWKLSPIDKASLDKWDDYTEAKEAMFFYTDTADAPWTIIKSNDKKRARLNCMRHFLSTIDYPGKDKHVVGEPDPLIVGRAHHVIQKSEHILGTALHPDQRARQD.

Residues 1-60 (METAKPIAPQKDSKANGVDATDPVVKVASPQDPAGDAKVEDATAPVAEVEPRTPRNRRLP) form a disordered region.

The protein belongs to the polyphosphate kinase 2 (PPK2) family. Class I subfamily. Mg(2+) is required as a cofactor.

The catalysed reaction is [phosphate](n) + ATP = [phosphate](n+1) + ADP. It carries out the reaction [phosphate](n) + CTP = [phosphate](n+1) + CDP. The enzyme catalyses [phosphate](n) + GTP = [phosphate](n+1) + GDP. It catalyses the reaction [phosphate](n) + UTP = [phosphate](n+1) + UDP. Its function is as follows. Uses inorganic polyphosphate (polyP) as a donor to convert NDP to NTP. PolyP hydrolysis is slightly faster with ADP, but it can also use GDP, CDP and UDP. This chain is NDP-polyphosphate phosphotransferase 2, found in Ruegeria pomeroyi (strain ATCC 700808 / DSM 15171 / DSS-3) (Silicibacter pomeroyi).